The following is a 975-amino-acid chain: 5'-3' exoribonuclease 2 homolog (975 aa).

The CCHC-type zinc-finger motif lies at 262–279; that stretch reads RACDLCGQYGHELKECRG. Disordered stretches follow at residues 424-443 and 505-532; these read MQMY…GRGQ and SPAD…EGPK. The tract at residues 534-787 is interaction with paxt-1; the sequence is DIRLYESGWK…GICVLYEDPE (254 aa). The segment covering 804 to 821 has biased composition (basic and acidic residues); it reads EPEKTLKPDDWNDRRDGR. Positions 804 to 975 are disordered; sequence EPEKTLKPDD…GGYHGNSSWR (172 aa). Composition is skewed to gly residues over residues 850–860, 886–895, and 908–932; these read RGGGGGGGGYR, NYGGRDGGGP, and GYQG…GGGS.

Belongs to the 5'-3' exonuclease family. XRN2/RAT1 subfamily. Interacts with paxt-1 (via N-terminus); the interaction is direct and results in stabilization of xrn-2 in the complex. Expressed in the pharyngeal myoepithelium and intestine. Also expressed in several anterior neurons including the sensory neurons, as well as the interneuron PVT and the pharyngeal motorneuron M5.

The protein localises to the nucleus. Functionally, possesses 5'-&gt;3' exoribonuclease activity. Plays a role in maintenance of steady-state concentration and turnover of microRNAs (miRNA) by degradation of mature miRNA. Degradation role is enhanced when in complex with paxt-1. Partially redundant to xrn-1 in miRNA guide strand degradation. Implicated in differential regulation of mRNAs such as let-7 by controlling the accumulation of mature miRNA. Positively regulates molting of the pharyngeal cuticle. The sequence is that of 5'-3' exoribonuclease 2 homolog from Caenorhabditis elegans.